The chain runs to 94 residues: Small ribosomal subunit protein bS6 (94 aa).

The protein belongs to the bacterial ribosomal protein bS6 family.

Its function is as follows. Binds together with bS18 to 16S ribosomal RNA. This chain is Small ribosomal subunit protein bS6, found in Alkaliphilus oremlandii (strain OhILAs) (Clostridium oremlandii (strain OhILAs)).